Consider the following 353-residue polypeptide: Elongation factor Ts (353 aa).

The interval 80 to 83 (TDFV) is involved in Mg(2+) ion dislocation from EF-Tu.

Belongs to the EF-Ts family.

It localises to the cytoplasm. Its function is as follows. Associates with the EF-Tu.GDP complex and induces the exchange of GDP to GTP. It remains bound to the aminoacyl-tRNA.EF-Tu.GTP complex up to the GTP hydrolysis stage on the ribosome. This Sulfurovum sp. (strain NBC37-1) protein is Elongation factor Ts.